A 338-amino-acid chain; its full sequence is Ketol-acid reductoisomerase (NADP(+)) (338 aa).

The region spanning 1 to 181 (MNVYYDKDCD…GGGRSGIIET (181 aa)) is the KARI N-terminal Rossmann domain. NADP(+) is bound by residues 24–27 (YGSQ), arginine 47, serine 50, serine 52, and 82–85 (DEFQ). Residue histidine 107 is part of the active site. Glycine 133 serves as a coordination point for NADP(+). Residues 182–327 (TFKDETETDL…AKLRGMMPWI (146 aa)) form the KARI C-terminal knotted domain. Aspartate 190, glutamate 194, glutamate 226, and glutamate 230 together coordinate Mg(2+). Serine 251 contributes to the substrate binding site.

This sequence belongs to the ketol-acid reductoisomerase family. Mg(2+) serves as cofactor.

It carries out the reaction (2R)-2,3-dihydroxy-3-methylbutanoate + NADP(+) = (2S)-2-acetolactate + NADPH + H(+). It catalyses the reaction (2R,3R)-2,3-dihydroxy-3-methylpentanoate + NADP(+) = (S)-2-ethyl-2-hydroxy-3-oxobutanoate + NADPH + H(+). The protein operates within amino-acid biosynthesis; L-isoleucine biosynthesis; L-isoleucine from 2-oxobutanoate: step 2/4. It participates in amino-acid biosynthesis; L-valine biosynthesis; L-valine from pyruvate: step 2/4. Involved in the biosynthesis of branched-chain amino acids (BCAA). Catalyzes an alkyl-migration followed by a ketol-acid reduction of (S)-2-acetolactate (S2AL) to yield (R)-2,3-dihydroxy-isovalerate. In the isomerase reaction, S2AL is rearranged via a Mg-dependent methyl migration to produce 3-hydroxy-3-methyl-2-ketobutyrate (HMKB). In the reductase reaction, this 2-ketoacid undergoes a metal-dependent reduction by NADPH to yield (R)-2,3-dihydroxy-isovalerate. This chain is Ketol-acid reductoisomerase (NADP(+)), found in Psychrobacter arcticus (strain DSM 17307 / VKM B-2377 / 273-4).